A 77-amino-acid chain; its full sequence is Immune protein Tis1 (77 aa).

Immunity protein that plays a role in preventing early activation of toxin Tas1. The sequence is that of Immune protein Tis1 (tis1) from Pseudomonas aeruginosa (strain UCBPP-PA14).